A 226-amino-acid polypeptide reads, in one-letter code: Octanoyltransferase (226 aa).

Positions G34 to R216 constitute a BPL/LPL catalytic domain. Residues R73 to H80, A145 to G147, and G158 to A160 contribute to the substrate site. C176 (acyl-thioester intermediate) is an active-site residue.

This sequence belongs to the LipB family.

It localises to the cytoplasm. The catalysed reaction is octanoyl-[ACP] + L-lysyl-[protein] = N(6)-octanoyl-L-lysyl-[protein] + holo-[ACP] + H(+). The protein operates within protein modification; protein lipoylation via endogenous pathway; protein N(6)-(lipoyl)lysine from octanoyl-[acyl-carrier-protein]: step 1/2. Functionally, catalyzes the transfer of endogenously produced octanoic acid from octanoyl-acyl-carrier-protein onto the lipoyl domains of lipoate-dependent enzymes. Lipoyl-ACP can also act as a substrate although octanoyl-ACP is likely to be the physiological substrate. The sequence is that of Octanoyltransferase from Maricaulis maris (strain MCS10) (Caulobacter maris).